Here is a 103-residue protein sequence, read N- to C-terminus: Small ribosomal subunit protein uS10 (103 aa).

The protein belongs to the universal ribosomal protein uS10 family. Part of the 30S ribosomal subunit.

Functionally, involved in the binding of tRNA to the ribosomes. This chain is Small ribosomal subunit protein uS10, found in Neisseria gonorrhoeae (strain ATCC 700825 / FA 1090).